A 102-amino-acid chain; its full sequence is Small ribosomal subunit protein uS14m (102 aa).

It belongs to the universal ribosomal protein uS14 family.

Its subcellular location is the mitochondrion. The chain is Small ribosomal subunit protein uS14m (RPS14) from Paramecium tetraurelia.